We begin with the raw amino-acid sequence, 590 residues long: Probable metalloendopeptidase G1-type (590 aa).

H41 serves as a coordination point for Zn(2+). E44 is an active-site residue. H45 contributes to the Zn(2+) binding site.

The protein belongs to the peptidase M44 family. The cofactor is Zn(2+).

In terms of biological role, seems to be involved in viral proteins maturation by cleavage at Ala-Gly-|-Xaa motifs. In Oryctolagus cuniculus (Rabbit), this protein is Probable metalloendopeptidase G1-type (GP045L).